Consider the following 359-residue polypeptide: Cytokine receptor-like factor 2 (359 aa).

The N-terminal stretch at 1 to 19 (MAWALAVILLPRLLAAAAA) is a signal peptide. At 20–232 (AAAVTSRGDV…PAPSPALAPP (213 aa)) the chain is on the extracellular side. Residue asparagine 53 is glycosylated (N-linked (GlcNAc...) asparagine). Cysteine 68 and cysteine 82 are joined by a disulfide. The Fibronectin type-III domain occupies 119–213 (PPWNVTLLWT…WTAVTRLSGA (95 aa)). Asparagine 122 carries N-linked (GlcNAc...) asparagine glycosylation. Disulfide bonds link cysteine 168–cysteine 169 and cysteine 181–cysteine 219. Residues 201–205 (PSEWT) carry the WSXWS motif motif. The chain crosses the membrane as a helical span at residues 233-253 (LLPLGCGLAALLTLSLLLAAL). Residues 254-359 (RLRRVKDALL…MVGDSGYMTL (106 aa)) are Cytoplasmic-facing. Residues 262-270 (LLPCVPDPS) carry the Box 1 motif motif. The disordered stretch occupies residues 312-336 (KRVEPEDGTSLCTVPRPPSFEPRGP).

The protein belongs to the type I cytokine receptor family. Type 5 subfamily. The TSLP receptor is a heterodimer of CRLF2 and IL7R. Binding of TSLP to CRLF2/TSLPR is a mechanistic prerequisite for recruitment of IL7R to the high-affinity ternary complex. As to expression, high level of expression in liver, lung and testis. Also expressed in heart, brain, spleen, thymus and bone marrow. Highly expressed in progenitors and myeloid cells. Isoform 2 is expressed in primary hemotopoietic cells.

The protein localises to the cell membrane. It is found in the secreted. Receptor for thymic stromal lymphopoietin (TSLP). Forms a functional complex with TSLP and IL7R which is capable of stimulating cell proliferation through activation of STAT3 and STAT5. Also activates JAK2. Implicated in the development of the hematopoietic system. In Mus musculus (Mouse), this protein is Cytokine receptor-like factor 2 (Crlf2).